The following is a 242-amino-acid chain: Ubiquinone/menaquinone biosynthesis C-methyltransferase UbiE (242 aa).

Residues Thr69, Asp87, and 114–115 (NA) each bind S-adenosyl-L-methionine.

It belongs to the class I-like SAM-binding methyltransferase superfamily. MenG/UbiE family.

It catalyses the reaction a 2-demethylmenaquinol + S-adenosyl-L-methionine = a menaquinol + S-adenosyl-L-homocysteine + H(+). The catalysed reaction is a 2-methoxy-6-(all-trans-polyprenyl)benzene-1,4-diol + S-adenosyl-L-methionine = a 5-methoxy-2-methyl-3-(all-trans-polyprenyl)benzene-1,4-diol + S-adenosyl-L-homocysteine + H(+). The protein operates within quinol/quinone metabolism; menaquinone biosynthesis; menaquinol from 1,4-dihydroxy-2-naphthoate: step 2/2. Its pathway is cofactor biosynthesis; ubiquinone biosynthesis. Its function is as follows. Methyltransferase required for the conversion of demethylmenaquinol (DMKH2) to menaquinol (MKH2) and the conversion of 2-polyprenyl-6-methoxy-1,4-benzoquinol (DDMQH2) to 2-polyprenyl-3-methyl-6-methoxy-1,4-benzoquinol (DMQH2). The chain is Ubiquinone/menaquinone biosynthesis C-methyltransferase UbiE from Zymomonas mobilis subsp. mobilis (strain ATCC 31821 / ZM4 / CP4).